Here is a 257-residue protein sequence, read N- to C-terminus: Transmembrane protein 101 (257 aa).

Transmembrane regions (helical) follow at residues 24–40 (TRCP…LYAE), 52–72 (VPYL…MSFG), 77–97 (WFAL…YIGG), 110–130 (YSRT…AGEL), 139–159 (SLQS…AYSL), 182–202 (LFFV…YVTL), 206–226 (ILAV…SYWH), and 233–253 (FWNQ…AVIL).

It localises to the membrane. Its function is as follows. May activate NF-kappa-B signaling pathways. This is Transmembrane protein 101 (Tmem101) from Mus musculus (Mouse).